Reading from the N-terminus, the 205-residue chain is MTRMLLMGPPGSGKGTQATRIADKLGIVPISTGDIFRHNVKSMTPLGVEAKRYIDNGDFVPDEVTNRMVADRIAQADAEHGFLLDGYPRTKGQVEALDAMLAEAGQSLSAVVELEVPDEELVERLLKRAEIEGRADDTQEVIEHRLDLYHRETESVIQEYVERGIVARVDGTGQIDDVTERLLQAVYSVRSATGSLPVIQPGAES.

Residue 11–16 participates in ATP binding; it reads GSGKGT. An NMP region spans residues 31 to 60; it reads STGDIFRHNVKSMTPLGVEAKRYIDNGDFV. AMP-binding positions include Thr-32, Arg-37, 58-60, 86-89, and Gln-93; these read DFV and GYPR. Residues 127–137 form an LID region; sequence KRAEIEGRADD. Residue Arg-128 participates in ATP binding. The AMP site is built by Arg-134 and Arg-145. Gly-173 provides a ligand contact to ATP.

Belongs to the adenylate kinase family. In terms of assembly, monomer.

The protein resides in the cytoplasm. It catalyses the reaction AMP + ATP = 2 ADP. The protein operates within purine metabolism; AMP biosynthesis via salvage pathway; AMP from ADP: step 1/1. Catalyzes the reversible transfer of the terminal phosphate group between ATP and AMP. Plays an important role in cellular energy homeostasis and in adenine nucleotide metabolism. The sequence is that of Adenylate kinase from Micrococcus luteus (strain ATCC 4698 / DSM 20030 / JCM 1464 / CCM 169 / CCUG 5858 / IAM 1056 / NBRC 3333 / NCIMB 9278 / NCTC 2665 / VKM Ac-2230) (Micrococcus lysodeikticus).